A 1401-amino-acid polypeptide reads, in one-letter code: Lysine-specific demethylase 6A (1401 aa).

The interval 1 to 1095 (MKSCGVSLAT…TNIDLSDDKK (1095 aa)) is interaction with SUPT6H. TPR repeat units lie at residues 93–126 (SDFFCQLGHFNLLLEDYPKALSAYQRYYSLQSDY), 130–163 (AAFLYGLGLVYFHYNAFQWAIKAFQEVLYVDPSF), 170–199 (HLRLGLMFKVNTDYESSLKHFQLALVDCNP), 205–238 (AEIQFHIAHLYETQRKYHSAKEAYEQLLQTENLS), 250–283 (GWMHHTVDLLGDKATKESYAIQYLQKSLEADPNS), 284–317 (GQSWYFLGRCYSSIGKVQDAFISYRQSIDKSEAS), 318–351 (ADTWCSIGVLYQQQNQPMDALQAYICAVQLDHGH), and 352–385 (AAAWMDLGTLYESCNQPQDAIKCYLNATRSKSCS). Positions 437–449 (AMNTAQQNTSDNW) are enriched in polar residues. Residues 437-457 (AMNTAQQNTSDNWSGGHAVSH) are disordered. Position 519 is an omega-N-methylarginine (Arg-519). Residues 521–541 (TGIPNGPTADSSLPTNSVSGQ) form a disordered region. Arg-549 carries the post-translational modification Omega-N-methylarginine. 2 stretches are compositionally biased toward polar residues: residues 624-652 (LTSSAEEPWKNQLSNSTQGLHKGQSSHSA) and 660-724 (LSST…SGNI). 5 disordered regions span residues 624 to 746 (LTSS…SVEG), 758 to 778 (AVCSPSHGDSKSPGLLSSDNP), 810 to 864 (KTDN…ESQS), 914 to 940 (LLDKCPPPRPPSSPYPPLPKDKLNPPT), and 1043 to 1079 (FQESLREENEKRSHHKDHSDSESTSSDNSGRRRKGPF). Ser-769 bears the Phosphoserine mark. Over residues 814-833 (SVASSPSSAISTATPSPKST) the composition is skewed to low complexity. Phosphothreonine is present on Thr-827. Ser-829 is subject to Phosphoserine. Residues 834–848 (EQTTTNSVTSLNSPH) show a composition bias toward polar residues. Positions 918-931 (CPPPRPPSSPYPPL) are enriched in pro residues. The span at 1046 to 1063 (SLREENEKRSHHKDHSDS) shows a compositional bias: basic and acidic residues. Positions 1095-1258 (KWKLQLHELT…YKLAVERYEW (164 aa)) constitute a JmjC domain. 3 residues coordinate Fe cation: His-1146, Glu-1148, and His-1226. 4 residues coordinate Zn(2+): Cys-1331, Cys-1334, Cys-1358, and Cys-1361.

This sequence belongs to the UTX family. Interacts with TLE1. Component of the MLL2/3 complex (also named ASCOM complex), at least composed of KMT2D/MLL2 or KMT2C/MLL3, ASH2L, RBBP5, WDR5, NCOA6, DPY30, KDM6A (or KDM6B), PAXIP1/PTIP, PAGR1 and alpha- and beta-tubulin. Interacts with SUPT6H. Interacts with SMARCA4. Interacts with PROSER1. L-ascorbate is required as a cofactor. Fe(2+) serves as cofactor.

Its subcellular location is the nucleus. The catalysed reaction is N(6),N(6),N(6)-trimethyl-L-lysyl(27)-[histone H3] + 2 2-oxoglutarate + 2 O2 = N(6)-methyl-L-lysyl(27)-[histone H3] + 2 formaldehyde + 2 succinate + 2 CO2. In terms of biological role, histone demethylase that specifically demethylates 'Lys-27' of histone H3, thereby playing a central role in histone code. Demethylates trimethylated and dimethylated but not monomethylated H3 'Lys-27'. Plays a central role in regulation of posterior development, by regulating HOX gene expression. Demethylation of 'Lys-27' of histone H3 is concomitant with methylation of 'Lys-4' of histone H3, and regulates the recruitment of the PRC1 complex and monoubiquitination of histone H2A. Plays a demethylase-independent role in chromatin remodeling to regulate T-box family member-dependent gene expression. The chain is Lysine-specific demethylase 6A (KDM6A) from Homo sapiens (Human).